A 352-amino-acid chain; its full sequence is MVFRIASSPYTHNQRQTSRIMLLVLLAAVPGIAAQLWFFGWGTLVQILLASVSALLAEALVLKLRKQSVAATLKDNSALLTGLLLAVSIPPLAPWWMVVLGTVFAVIIAKQLYGGLGQNPFNPAMIGYVVLLISFPVQMTSWLPPHEIAVNIPGFIDAIQVIFSGHTTSGGDMNTLRLGIDGISQATPLDTFKTSVRAGHSVEEIMQYPIYSGILAGAGWQWVNLAWLAGGVWLLWQKAIRWHVPLSFLVTLALCATLGWLFSPDTLAAPQIHLLSGATMLGAFFILTDPVTASTTNRGRLIFGALAGLLVWMIRSFGGYPDGVAFAVLLANITVPLIDYYTRPRVYGHRKG.

The next 4 helical transmembrane spans lie at 20–40 (IMLL…WFFG), 42–62 (GTLV…ALVL), 89–109 (IPPL…VIIA), and 123–143 (PAMI…TSWL). FMN phosphoryl threonine is present on Thr187. A run of 5 helical transmembrane segments spans residues 214 to 234 (ILAG…GVWL), 242 to 262 (WHVP…GWLF), 267 to 287 (LAAP…FFIL), 301 to 321 (LIFG…GGYP), and 322 to 342 (DGVA…DYYT).

This sequence belongs to the NqrB/RnfD family. As to quaternary structure, the complex is composed of six subunits: RsxA, RsxB, RsxC, RsxD, RsxE and RsxG. The cofactor is FMN.

The protein resides in the cell inner membrane. Functionally, part of a membrane-bound complex that couples electron transfer with translocation of ions across the membrane. Required to maintain the reduced state of SoxR. The chain is Ion-translocating oxidoreductase complex subunit D from Escherichia coli (strain UTI89 / UPEC).